The following is a 178-amino-acid chain: ATP synthase subunit delta (178 aa).

It belongs to the ATPase delta chain family. F-type ATPases have 2 components, F(1) - the catalytic core - and F(0) - the membrane proton channel. F(1) has five subunits: alpha(3), beta(3), gamma(1), delta(1), epsilon(1). F(0) has three main subunits: a(1), b(2) and c(10-14). The alpha and beta chains form an alternating ring which encloses part of the gamma chain. F(1) is attached to F(0) by a central stalk formed by the gamma and epsilon chains, while a peripheral stalk is formed by the delta and b chains.

The protein resides in the cell inner membrane. F(1)F(0) ATP synthase produces ATP from ADP in the presence of a proton or sodium gradient. F-type ATPases consist of two structural domains, F(1) containing the extramembraneous catalytic core and F(0) containing the membrane proton channel, linked together by a central stalk and a peripheral stalk. During catalysis, ATP synthesis in the catalytic domain of F(1) is coupled via a rotary mechanism of the central stalk subunits to proton translocation. Functionally, this protein is part of the stalk that links CF(0) to CF(1). It either transmits conformational changes from CF(0) to CF(1) or is implicated in proton conduction. The sequence is that of ATP synthase subunit delta from Pseudomonas entomophila (strain L48).